The primary structure comprises 389 residues: Sulfate adenylyltransferase (389 aa).

It belongs to the sulfate adenylyltransferase family.

The enzyme catalyses sulfate + ATP + H(+) = adenosine 5'-phosphosulfate + diphosphate. It functions in the pathway sulfur metabolism; hydrogen sulfide biosynthesis; sulfite from sulfate: step 1/3. The protein is Sulfate adenylyltransferase of Desulforamulus reducens (strain ATCC BAA-1160 / DSM 100696 / MI-1) (Desulfotomaculum reducens).